Consider the following 540-residue polypeptide: T-complex protein 1 subunit theta (540 aa).

This sequence belongs to the TCP-1 chaperonin family. Heterooligomeric complex of about 850 to 900 kDa that forms two stacked rings, 12 to 16 nm in diameter.

Its subcellular location is the cytoplasm. In terms of biological role, molecular chaperone; assists the folding of proteins upon ATP hydrolysis. Known to play a role, in vitro, in the folding of actin and tubulin. In yeast may play a role in mitotic spindle formation. This chain is T-complex protein 1 subunit theta (CCT8), found in Candida albicans (Yeast).